The chain runs to 79 residues: uncharacterized protein (79 aa).

A signal peptide spans Met1–Ala18. The segment at Pro24–Pro44 is disordered. 4 N-linked (GlcNAc...) asparagine glycosylation sites follow: Asn25, Asn30, Asn35, and Asn40. Residue Gly55 is the site of GPI-anchor amidated glycine attachment. Residues Glu56–Phe79 constitute a propeptide, removed in mature form.

It is found in the cell membrane. This is an uncharacterized protein from Saccharomyces cerevisiae (strain ATCC 204508 / S288c) (Baker's yeast).